Consider the following 600-residue polypeptide: Methylenetetrahydrofolate reductase 2 (600 aa).

E22 acts as the Proton donor/acceptor in catalysis. Residues 22-27 (EYFVPK) and 54-55 (TW) each bind NAD(+). FAD-binding positions include 54 to 55 (TW), H84, 114 to 116 (RGD), 133 to 134 (YA), Y156, D171, and K178. D116 is a substrate binding site. The substrate site is built by Q189 and Y282.

Belongs to the methylenetetrahydrofolate reductase family. FAD serves as cofactor.

It catalyses the reaction (6S)-5-methyl-5,6,7,8-tetrahydrofolate + NADP(+) = (6R)-5,10-methylene-5,6,7,8-tetrahydrofolate + NADPH + H(+). It participates in one-carbon metabolism; tetrahydrofolate interconversion. This Saccharomyces cerevisiae (strain ATCC 204508 / S288c) (Baker's yeast) protein is Methylenetetrahydrofolate reductase 2 (MET13).